We begin with the raw amino-acid sequence, 212 residues long: Uridine kinase (212 aa).

13–20 (GGSGSGKT) lines the ATP pocket.

The protein belongs to the uridine kinase family.

It localises to the cytoplasm. The catalysed reaction is uridine + ATP = UMP + ADP + H(+). It catalyses the reaction cytidine + ATP = CMP + ADP + H(+). The protein operates within pyrimidine metabolism; CTP biosynthesis via salvage pathway; CTP from cytidine: step 1/3. It functions in the pathway pyrimidine metabolism; UMP biosynthesis via salvage pathway; UMP from uridine: step 1/1. The polypeptide is Uridine kinase (Bacillus cereus (strain G9842)).